We begin with the raw amino-acid sequence, 535 residues long: Alpha-1,3-mannosyl-glycoprotein 4-beta-N-acetylglucosaminyltransferase A (535 aa).

Topologically, residues 1–4 are cytoplasmic; that stretch reads MRLR. A helical; Signal-anchor for type II membrane protein membrane pass occupies residues 5–27; that stretch reads NGTVATALAFITSFLTLSWYTTW. Positions 28–63 form a coiled coil; it reads QNGKEKLIAYQREFLALKERLRIAEHRISQRSSELN. Residues 28–535 lie on the Lumenal side of the membrane; sequence QNGKEKLIAY…NEIHIKKATK (508 aa). Residues Asn77 and Asn458 are each glycosylated (N-linked (GlcNAc...) asparagine). At Ser474 the chain carries Phosphoserine.

It belongs to the glycosyltransferase 54 family. A divalent metal cation is required as a cofactor. Post-translationally, N-glycosylated.

It localises to the golgi apparatus membrane. The protein localises to the secreted. The catalysed reaction is N(4)-{beta-D-GlcNAc-(1-&gt;2)-alpha-D-Man-(1-&gt;3)-[beta-D-GlcNAc-(1-&gt;2)-alpha-D-Man-(1-&gt;6)]-beta-D-Man-(1-&gt;4)-beta-D-GlcNAc-(1-&gt;4)-beta-D-GlcNAc}-L-asparaginyl-[protein] + UDP-N-acetyl-alpha-D-glucosamine = N(4)-{beta-D-GlcNAc-(1-&gt;2)-[beta-D-GlcNAc-(1-&gt;4)]-alpha-D-Man-(1-&gt;3)-[beta-D-GlcNAc-(1-&gt;2)-alpha-D-Man-(1-&gt;6)]-beta-D-Man-(1-&gt;4)-beta-D-GlcNAc-(1-&gt;4)-beta-D-GlcNAc}-L-asparaginyl-[protein] + UDP + H(+). It carries out the reaction an N(4)-{beta-D-GlcNAc-(1-&gt;2)-alpha-D-Man-(1-&gt;3)-[alpha-D-Man-(1-&gt;6)]-beta-D-Man-(1-&gt;4)-beta-D-GlcNAc-(1-&gt;4)-beta-D-GlcNAc}-L-asparaginyl-[protein] + UDP-N-acetyl-alpha-D-glucosamine = an N(4)-{beta-D-GlcNAc-(1-&gt;2)-[beta-D-GlcNAc-(1-&gt;4)]-alpha-D-Man-(1-&gt;3)-[alpha-D-Man-(1-&gt;6)]-beta-D-Man-(1-&gt;4)-beta-D-GlcNAc-(1-&gt;4)-beta-D-GlcNAc}-L-asparaginyl-[protein] + UDP + H(+). The enzyme catalyses an N(4)-{beta-D-GlcNAc-(1-&gt;2)-alpha-D-Man-(1-&gt;3)-[beta-D-GlcNAc-(1-&gt;2)-[beta-D-GlcNAc-(1-&gt;6)]-alpha-D-Man-(1-&gt;6)]-beta-D-Man-(1-&gt;4)-beta-D-GlcNAc-(1-&gt;4)-beta-D-GlcNAc}-L-asparaginyl-[protein] + UDP-N-acetyl-alpha-D-glucosamine = an N(4)-{beta-D-GlcNAc-(1-&gt;2)-[beta-D-GlcNAc-(1-&gt;4)]-alpha-D-Man-(1-&gt;3)-[beta-D-GlcNAc-(1-&gt;2)-[beta-D-GlcNAc-(1-&gt;6)]-alpha-D-Man-(1-&gt;6)]-beta-D-Man-(1-&gt;4)-beta-D-GlcNAc-(1-&gt;4)-beta-D-GlcNAc}-L-asparaginyl-[protein] + UDP + H(+). It catalyses the reaction an N(4)-{beta-D-GlcNAc-(1-&gt;2)-alpha-D-Man-(1-&gt;3)-[beta-D-GlcNAc-(1-&gt;2)-alpha-D-Man-(1-&gt;6)]-beta-D-Man-(1-&gt;4)-beta-D-GlcNAc-(1-&gt;4)-[alpha-L-Fuc-(1-&gt;6)]-beta-D-GlcNAc}-L-asparaginyl-[protein] + UDP-N-acetyl-alpha-D-glucosamine = N(4)-{beta-D-GlcNAc-(1-&gt;2)-[beta-D-GlcNAc-(1-&gt;4)]-alpha-D-Man-(1-&gt;3)-[beta-D-GlcNAc-(1-&gt;2)-alpha-D-Man-(1-&gt;6)]-beta-D-Man-(1-&gt;4)-beta-D-GlcNAc-(1-&gt;4)-[alpha-L-Fuc-(1-&gt;6)]-beta-D-GlcNAc}-asparaginyl-[protein] + UDP + H(+). The catalysed reaction is an N(4)-{beta-D-GlcNAc-(1-&gt;2)-alpha-D-Man-(1-&gt;3)-[beta-D-Gal-(1-&gt;4)-beta-D-GlcNAc-(1-&gt;2)-alpha-D-Man-(1-&gt;6)]-beta-D-Man-(1-&gt;4)-beta-D-GlcNAc-(1-&gt;4)-beta-D-GlcNAc}-L-asparaginyl-[protein] + UDP-N-acetyl-alpha-D-glucosamine = an N(4)-{beta-D-GlcNAc-(1-&gt;2)-[beta-D-GlcNAc-(1-&gt;4)]-alpha-D-Man-(1-&gt;3)-[beta-D-Gal-(1-&gt;4)-beta-D-GlcNAc-(1-&gt;2)-alpha-D-Man-(1-&gt;6)]-beta-D-Man-(1-&gt;4)-beta-D-GlcNAc-(1-&gt;4)-beta-D-GlcNAc}-L-asparaginyl-[protein] + UDP + H(+). It carries out the reaction N(4)-{beta-D-GlcNAc-(1-&gt;2)-alpha-D-Man-(1-&gt;3)-[alpha-D-Man-(1-&gt;3)-{alpha-D-Man-(1-&gt;6)}-alpha-D-Man-(1-&gt;6)]-beta-D-Man-(1-&gt;4)-beta-D-GlcNAc-(1-&gt;4)-beta-D-GlcNAc}-asparaginyl-[protein] + UDP-N-acetyl-alpha-D-glucosamine = N(4)-{beta-D-GlcNAc-(1-&gt;2)-[beta-D-GlcNAc-(1-&gt;4)]-alpha-D-Man-(1-&gt;3)-[alpha-D-Man-(1-&gt;3)-{alpha-D-Man-(1-&gt;6)}-alpha-D-Man-(1-&gt;6)]-beta-D-Man-(1-&gt;4)-beta-D-GlcNAc-(1-&gt;4)-beta-D-GlcNAc}-asparaginyl-[protein] + UDP + H(+). The enzyme catalyses N(4)-{beta-D-GlcNAc-(1-&gt;2)-alpha-D-Man-(1-&gt;3)-beta-D-Man-(1-&gt;4)-beta-D-GlcNAc-(1-&gt;4)-beta-D-GlcNAc}-asparaginyl-[protein] + UDP-N-acetyl-alpha-D-glucosamine = N(4)-{beta-D-GlcNAc-(1-&gt;2)-[beta-D-GlcNAc-(1-&gt;4)]-alpha-D-Man-(1-&gt;3)-beta-D-Man-(1-&gt;4)-beta-D-GlcNAc-(1-&gt;4)-beta-D-GlcNAc}-asparaginyl-[protein] + UDP + H(+). It functions in the pathway protein modification; protein glycosylation. Inhibited by UDP. In terms of biological role, glycosyltransferase that catalyze the transfer of GlcNAc from UDP-GlcNAc to the GlcNAcbeta1-2Manalpha1-3 arm of the core structure of N-linked glycans through a beta1-4 linkage and participates in the production of tri- and tetra-antennary N-linked sugar chains. Involved in glucose transport by mediating SLC2A2/GLUT2 glycosylation, thereby controlling cell-surface expression of SLC2A2 in pancreatic beta cells. This is Alpha-1,3-mannosyl-glycoprotein 4-beta-N-acetylglucosaminyltransferase A from Macaca fascicularis (Crab-eating macaque).